A 386-amino-acid polypeptide reads, in one-letter code: Succinyl-diaminopimelate desuccinylase (386 aa).

Residue H72 coordinates Zn(2+). D74 is a catalytic residue. A Zn(2+)-binding site is contributed by D105. E139 (proton acceptor) is an active-site residue. Zn(2+) contacts are provided by E140, E168, and H353.

Belongs to the peptidase M20A family. DapE subfamily. In terms of assembly, homodimer. Requires Zn(2+) as cofactor. Co(2+) serves as cofactor.

It carries out the reaction N-succinyl-(2S,6S)-2,6-diaminopimelate + H2O = (2S,6S)-2,6-diaminopimelate + succinate. Its pathway is amino-acid biosynthesis; L-lysine biosynthesis via DAP pathway; LL-2,6-diaminopimelate from (S)-tetrahydrodipicolinate (succinylase route): step 3/3. Functionally, catalyzes the hydrolysis of N-succinyl-L,L-diaminopimelic acid (SDAP), forming succinate and LL-2,6-diaminopimelate (DAP), an intermediate involved in the bacterial biosynthesis of lysine and meso-diaminopimelic acid, an essential component of bacterial cell walls. The protein is Succinyl-diaminopimelate desuccinylase of Rhodospirillum centenum (strain ATCC 51521 / SW).